Here is a 270-residue protein sequence, read N- to C-terminus: 4-hydroxy-tetrahydrodipicolinate reductase (270 aa).

NAD(+) is bound by residues 9–14 and Glu35; that span reads GSGGRM. Arg36 is an NADP(+) binding site. Residues 99–101 and 123–126 each bind NAD(+); these read GTT and ASNY. His156 functions as the Proton donor/acceptor in the catalytic mechanism. His157 contributes to the (S)-2,3,4,5-tetrahydrodipicolinate binding site. Lys160 functions as the Proton donor in the catalytic mechanism. A (S)-2,3,4,5-tetrahydrodipicolinate-binding site is contributed by 166–167; sequence GT.

It belongs to the DapB family.

It is found in the cytoplasm. It catalyses the reaction (S)-2,3,4,5-tetrahydrodipicolinate + NAD(+) + H2O = (2S,4S)-4-hydroxy-2,3,4,5-tetrahydrodipicolinate + NADH + H(+). The catalysed reaction is (S)-2,3,4,5-tetrahydrodipicolinate + NADP(+) + H2O = (2S,4S)-4-hydroxy-2,3,4,5-tetrahydrodipicolinate + NADPH + H(+). The protein operates within amino-acid biosynthesis; L-lysine biosynthesis via DAP pathway; (S)-tetrahydrodipicolinate from L-aspartate: step 4/4. Functionally, catalyzes the conversion of 4-hydroxy-tetrahydrodipicolinate (HTPA) to tetrahydrodipicolinate. This Histophilus somni (strain 2336) (Haemophilus somnus) protein is 4-hydroxy-tetrahydrodipicolinate reductase.